A 368-amino-acid polypeptide reads, in one-letter code: RNA polymerase sigma factor SigA (368 aa).

The span at 71 to 83 shows a compositional bias: basic and acidic residues; the sequence is NEKDSSDTDDKIN. A disordered region spans residues 71–90; that stretch reads NEKDSSDTDDKINPNDLSAP. A sigma-70 factor domain-2 region spans residues 135–205; the sequence is LAEANLRLVV…TRAIADQART (71 aa). The Interaction with polymerase core subunit RpoC signature appears at 159–162; sequence DLIQ. The segment at 214 to 290 is sigma-70 factor domain-3; that stretch reads ETINKLIRVQ…DQEAQSPSDH (77 aa). Residues 303-356 are sigma-70 factor domain-4; the sequence is VLDTLTDREENVLRLRFGLDDGRTRTLEEVGKVFGVTRERIRQIEAKALRKLRH. The segment at residues 329 to 348 is a DNA-binding region (H-T-H motif); it reads LEEVGKVFGVTRERIRQIEA.

The protein belongs to the sigma-70 factor family. RpoD/SigA subfamily. Interacts transiently with the RNA polymerase catalytic core.

Its subcellular location is the cytoplasm. Functionally, sigma factors are initiation factors that promote the attachment of RNA polymerase to specific initiation sites and are then released. This sigma factor is the primary sigma factor during exponential growth. The chain is RNA polymerase sigma factor SigA from Staphylococcus epidermidis (strain ATCC 35984 / DSM 28319 / BCRC 17069 / CCUG 31568 / BM 3577 / RP62A).